The sequence spans 56 residues: Trypsin inhibitor 1 (56 aa).

The first 25 residues, 1-25, serve as a signal peptide directing secretion; that stretch reads MATTMAKLITLVVLAILAFVEVSVS. A propeptide spanning residues 26–39 is cleaved from the precursor; the sequence is GYKTSISTITIEDN. A cross-link (cyclopeptide (Gly-Asp)) is located at residues 40–53; the sequence is GRCTKSIPPICFPD. A disulfide bridge links Cys42 with Cys50. Positions 54-56 are excised as a propeptide; the sequence is GRP.

In terms of processing, this is a cyclic peptide.

Its function is as follows. Inhibits trypsin, cathepsin G, elastase, chymotrypsin and thrombin. Does not inhibit factor Xa. The protein is Trypsin inhibitor 1 of Helianthus annuus (Common sunflower).